The chain runs to 587 residues: Bifunctional dihydrofolate reductase-thymidylate synthase (587 aa).

Residues 9-237 form the DHFR domain; it reads DIYAICACCK…TTLDFIIYSK (229 aa). NADP(+) is bound at residue 36 to 42; the sequence is GIGNAGV. Residue Asp51 coordinates substrate. NADP(+) is bound by residues 108 to 110 and 129 to 132; these read KKS and LSRT. Residues Ile173, Tyr179, and Thr194 each coordinate substrate. Position 174–181 (174–181) interacts with NADP(+); it reads GGSSVYKE. Residues 301 to 587 form a thymidylate synthase region; sequence NHPEYQYLNI…HDKINMDMAA (287 aa). Residue Arg324 participates in dUMP binding. Cys469 is a catalytic residue. DUMP is bound by residues His470, 488-492, Asn500, and 530-532; these read QRSCD and HVY.

The protein in the N-terminal section; belongs to the dihydrofolate reductase family. This sequence in the C-terminal section; belongs to the thymidylate synthase family. In terms of assembly, homodimer.

The enzyme catalyses (6S)-5,6,7,8-tetrahydrofolate + NADP(+) = 7,8-dihydrofolate + NADPH + H(+). It catalyses the reaction dUMP + (6R)-5,10-methylene-5,6,7,8-tetrahydrofolate = 7,8-dihydrofolate + dTMP. The protein operates within cofactor biosynthesis; tetrahydrofolate biosynthesis; 5,6,7,8-tetrahydrofolate from 7,8-dihydrofolate: step 1/1. In terms of biological role, bifunctional enzyme. Involved in de novo dTMP biosynthesis. Key enzyme in folate metabolism. Catalyzes an essential reaction for de novo glycine and purine synthesis, DNA precursor synthesis, and for the conversion of dUMP to dTMP. The polypeptide is Bifunctional dihydrofolate reductase-thymidylate synthase (Plasmodium berghei (strain Anka)).